The chain runs to 359 residues: Peptide methionine sulfoxide reductase MsrA/MsrB (359 aa).

The tract at residues 36 to 189 is peptide methionine sulfoxide reductase A; that stretch reads RVIYLAGGCF…PSGYCHIDLK (154 aa). C44 is a catalytic residue. The MsrB domain occupies 206–329; it reads DEVLKKKLTK…NSAALRFIPL (124 aa). Residue C318 is the Nucleophile of the active site.

The protein in the N-terminal section; belongs to the MsrA Met sulfoxide reductase family. This sequence in the C-terminal section; belongs to the MsrB Met sulfoxide reductase family.

It carries out the reaction L-methionyl-[protein] + [thioredoxin]-disulfide + H2O = L-methionyl-(S)-S-oxide-[protein] + [thioredoxin]-dithiol. It catalyses the reaction [thioredoxin]-disulfide + L-methionine + H2O = L-methionine (S)-S-oxide + [thioredoxin]-dithiol. The enzyme catalyses L-methionyl-[protein] + [thioredoxin]-disulfide + H2O = L-methionyl-(R)-S-oxide-[protein] + [thioredoxin]-dithiol. In terms of biological role, has an important function as a repair enzyme for proteins that have been inactivated by oxidation. Catalyzes the reversible oxidation-reduction of methionine sulfoxide in proteins to methionine. In Helicobacter pylori (strain ATCC 700392 / 26695) (Campylobacter pylori), this protein is Peptide methionine sulfoxide reductase MsrA/MsrB (msrAB).